A 587-amino-acid chain; its full sequence is Arginine--tRNA ligase (587 aa).

Residues Ala-123–His-133 carry the 'HIGH' region motif.

The protein belongs to the class-I aminoacyl-tRNA synthetase family. Monomer.

Its subcellular location is the cytoplasm. The catalysed reaction is tRNA(Arg) + L-arginine + ATP = L-arginyl-tRNA(Arg) + AMP + diphosphate. The sequence is that of Arginine--tRNA ligase from Alkaliphilus oremlandii (strain OhILAs) (Clostridium oremlandii (strain OhILAs)).